The following is a 143-amino-acid chain: Transcriptional regulator MraZ (143 aa).

SpoVT-AbrB domains follow at residues 5-47 (EYSH…PQKE) and 76-119 (AAEC…SQEL).

The protein belongs to the MraZ family. In terms of assembly, forms oligomers.

The protein localises to the cytoplasm. It localises to the nucleoid. The chain is Transcriptional regulator MraZ from Carboxydothermus hydrogenoformans (strain ATCC BAA-161 / DSM 6008 / Z-2901).